The following is a 423-amino-acid chain: Citrate synthase-like protein clz17 (423 aa).

Active-site residues include histidine 357 and aspartate 413.

It belongs to the citrate synthase family.

It participates in secondary metabolite biosynthesis. Citrate synthase-like protein; part of the gene cluster that mediates the biosynthesis of squalestatin S1 (SQS1, also known as zaragozic acid A), a heavily oxidized fungal polyketide that offers potent cholesterol lowering activity by targeting squalene synthase (SS). SQS1 is composed of a 2,8-dioxobicyclic[3.2.1]octane-3,4,5-tricarboxyclic acid core that is connected to two lipophilic polyketide arms. These initial steps feature the priming of an unusual benzoic acid starter unit onto the highly reducing polyketide synthase clz14, followed by oxaloacetate extension and product release to generate a tricarboxylic acid containing product. The phenylalanine ammonia lyase (PAL) clz10 and the acyl-CoA ligase clz12 are involved in transforming phenylalanine into benzoyl-CoA. The citrate synthase-like protein clz17 is involved in connecting the C-alpha-carbons of the hexaketide chain and oxaloacetate to afford the tricarboxylic acid unit. The potential hydrolytic enzymes, clz11 and clz13, are in close proximity to pks2 and may participate in product release. On the other side, the tetraketide arm is synthesized by a the squalestatin tetraketide synthase clz2 and enzymatically esterified to the core in the last biosynthetic step, by the acetyltransferase clz6. The biosynthesis of the tetraketide must involve 3 rounds of chain extension. After the first and second rounds methyl-transfer occurs, and in all rounds of extension the ketoreductase and dehydratase are active. The enoyl reductase and C-MeT of clz2 are not active in the final round of extension. The acetyltransferase clz6 appears to have a broad substrate selectivity for its acyl CoA substrate, allowing the in vitro synthesis of novel squalestatins. The biosynthesis of SQS1 requires several oxidative steps likely performed by oxidoreductases clz3, clz15 and clz16. Finally, in support of the identification of the cluster as being responsible for SQS1 production, the cluster contains a gene encoding a putative squalene synthase (SS) clz20, suggesting a likely mechanism for self-resistance. This chain is Citrate synthase-like protein clz17, found in Cochliobolus lunatus (Filamentous fungus).